A 345-amino-acid chain; its full sequence is Selenide, water dikinase (345 aa).

Cysteine 15 is an active-site residue. ATP is bound by residues lysine 18 and 46-48; that span reads SKD. Aspartate 49 contributes to the Mg(2+) binding site. Residues aspartate 66, aspartate 89, and 137–139 each bind ATP; that span reads GHS. Aspartate 89 provides a ligand contact to Mg(2+). Aspartate 225 lines the Mg(2+) pocket.

This sequence belongs to the selenophosphate synthase 1 family. Class I subfamily. As to quaternary structure, homodimer. Mg(2+) is required as a cofactor.

The enzyme catalyses hydrogenselenide + ATP + H2O = selenophosphate + AMP + phosphate + 2 H(+). Its function is as follows. Synthesizes selenophosphate from selenide and ATP. In Aeromonas salmonicida (strain A449), this protein is Selenide, water dikinase.